The following is a 101-amino-acid chain: Small ribosomal subunit protein uS14 (101 aa).

This sequence belongs to the universal ribosomal protein uS14 family. Part of the 30S ribosomal subunit. Contacts proteins S3 and S10.

Binds 16S rRNA, required for the assembly of 30S particles and may also be responsible for determining the conformation of the 16S rRNA at the A site. This chain is Small ribosomal subunit protein uS14, found in Paramagnetospirillum magneticum (strain ATCC 700264 / AMB-1) (Magnetospirillum magneticum).